A 48-amino-acid chain; its full sequence is MKDRLFLLGQHLLPHHLLSRAAGRLAECRVPWVKNSLIKAFARHFQVD.

This sequence belongs to the phosphatidylserine decarboxylase family. Type 1 subfamily. The cofactor is pyruvate.

It catalyses the reaction a 1,2-diacyl-sn-glycero-3-phospho-L-serine + H(+) = a 1,2-diacyl-sn-glycero-3-phosphoethanolamine + CO2. It participates in phospholipid metabolism; phosphatidylethanolamine biosynthesis; phosphatidylethanolamine from CDP-diacylglycerol: step 2/2. The sequence is that of Phosphatidylserine decarboxylase proenzyme (psd) from Azotobacter vinelandii.